Here is a 196-residue protein sequence, read N- to C-terminus: MSSQIDAVILAGGMARRMGGDDKGLVELNGEAMIKHTIDRIKPQVKEILINANRNQTRYAEFGFKVISDEHTGFLGPLAGMITAMGQTDADYLLVVPCDCPLLPTDLVPRMLAAIKAENAELAVASDGEYEQPVVLLLKPSLRDSMKAFLEAGERKVDFWYAKHHFVVESFADQPNAFVNVNTPEQKQRLAMEITK.

GTP contacts are provided by residues 10-12 (LAG), K23, N51, D69, and D99. Mg(2+) is bound at residue D99.

It belongs to the MobA family. As to quaternary structure, monomer. Mg(2+) serves as cofactor.

It localises to the cytoplasm. It catalyses the reaction Mo-molybdopterin + GTP + H(+) = Mo-molybdopterin guanine dinucleotide + diphosphate. Transfers a GMP moiety from GTP to Mo-molybdopterin (Mo-MPT) cofactor (Moco or molybdenum cofactor) to form Mo-molybdopterin guanine dinucleotide (Mo-MGD) cofactor. This Shewanella baltica (strain OS185) protein is Molybdenum cofactor guanylyltransferase.